The primary structure comprises 1611 residues: SH3 domain-containing protein C23A1.17 (1611 aa).

The SH3 domain maps to 3–67 (SFPTRVVALY…PKDFTEPAED (65 aa)). Disordered stretches follow at residues 275-648 (THPA…PTSL), 662-741 (IDPP…PPGL), 762-851 (AVPR…NSLN), and 886-1365 (TPST…FSAK). Over residues 278–296 (AASSTMATESSHQSPSADS) the composition is skewed to polar residues. Positions 300–312 (ELSKSQRVAKDDD) are enriched in basic and acidic residues. Residues 316–330 (VSNTANSDEPASSSK) are compositionally biased toward polar residues. Acidic residues-rich tracts occupy residues 361–373 (SEQEEDEYDDAES) and 387–420 (SEPEDQDEPSEKDDENKDVEEEQEQEQEEEQIDP). The span at 421-433 (EEAKRIALRERMA) shows a compositional bias: basic and acidic residues. Over residues 472–494 (STTNDSSPPKDSSSTSTQPTEQS) the composition is skewed to low complexity. Polar residues predominate over residues 576-586 (TQETSEQQVHK). A compositionally biased stretch (basic and acidic residues) spans 605 to 619 (FDKETLASNEAHEAV). A compositionally biased stretch (low complexity) spans 637 to 648 (SSSVVTPSPTSL). 3 stretches are compositionally biased toward polar residues: residues 799-808 (SRPSTGSQLR), 886-902 (TPSTATFQGHPTISNVA), and 923-940 (ATHQSSTGLTQEITQLGS). Pro residues-rich tracts occupy residues 963–974 (PAAPPSIPPPLP), 1022–1053 (PPVPLPSADAPPIPVPSTAPPVPIPTSTPPVP), and 1076–1241 (IPAP…PVPA). The segment covering 1242-1278 (PSSEAPSVSTPRSSVPSPHSNASPSPTSSSMASAAPA) has biased composition (low complexity). Phosphoserine occurs at positions 1258, 1261, and 1266. Positions 1300–1312 (KSSKSGEHHHHHN) are enriched in basic residues. Positions 1317-1327 (DSSSTRTSLAH) are enriched in polar residues. Positions 1340–1350 (RSSSRASKKPS) are enriched in low complexity. Positions 1351 to 1362 (IVSTTGPFNESF) are enriched in polar residues. S1379 bears the Phosphoserine mark. Residue T1380 is modified to Phosphothreonine.

It localises to the cytoplasm. In Schizosaccharomyces pombe (strain 972 / ATCC 24843) (Fission yeast), this protein is SH3 domain-containing protein C23A1.17.